The chain runs to 435 residues: GTPase Der (435 aa).

2 consecutive EngA-type G domains span residues 4 to 167 and 175 to 350; these read PTLA…PSED and IKFS…ENQT. GTP is bound by residues 10–17, 57–61, 119–122, 181–188, 228–232, and 293–296; these read GRPNVGKS, DTGGI, NKVD, DTAGI, and NKWD. The 85-residue stretch at 351-435 folds into the KH-like domain; it reads RRIQSSVLND…PIHIIARKRK (85 aa).

Belongs to the TRAFAC class TrmE-Era-EngA-EngB-Septin-like GTPase superfamily. EngA (Der) GTPase family. As to quaternary structure, associates with the 50S ribosomal subunit.

GTPase that plays an essential role in the late steps of ribosome biogenesis. In Lacticaseibacillus paracasei (strain ATCC 334 / BCRC 17002 / CCUG 31169 / CIP 107868 / KCTC 3260 / NRRL B-441) (Lactobacillus paracasei), this protein is GTPase Der.